A 341-amino-acid polypeptide reads, in one-letter code: Phosphate acyltransferase (341 aa).

Belongs to the PlsX family. As to quaternary structure, homodimer. Probably interacts with PlsY.

The protein resides in the cytoplasm. The catalysed reaction is a fatty acyl-[ACP] + phosphate = an acyl phosphate + holo-[ACP]. The protein operates within lipid metabolism; phospholipid metabolism. Catalyzes the reversible formation of acyl-phosphate (acyl-PO(4)) from acyl-[acyl-carrier-protein] (acyl-ACP). This enzyme utilizes acyl-ACP as fatty acyl donor, but not acyl-CoA. This is Phosphate acyltransferase from Lacticaseibacillus casei (strain BL23) (Lactobacillus casei).